A 258-amino-acid chain; its full sequence is Imidazole glycerol phosphate synthase subunit HisF (258 aa).

Catalysis depends on residues Asp-11 and Asp-130.

The protein belongs to the HisA/HisF family. In terms of assembly, heterodimer of HisH and HisF.

The protein localises to the cytoplasm. The enzyme catalyses 5-[(5-phospho-1-deoxy-D-ribulos-1-ylimino)methylamino]-1-(5-phospho-beta-D-ribosyl)imidazole-4-carboxamide + L-glutamine = D-erythro-1-(imidazol-4-yl)glycerol 3-phosphate + 5-amino-1-(5-phospho-beta-D-ribosyl)imidazole-4-carboxamide + L-glutamate + H(+). The protein operates within amino-acid biosynthesis; L-histidine biosynthesis; L-histidine from 5-phospho-alpha-D-ribose 1-diphosphate: step 5/9. Its function is as follows. IGPS catalyzes the conversion of PRFAR and glutamine to IGP, AICAR and glutamate. The HisF subunit catalyzes the cyclization activity that produces IGP and AICAR from PRFAR using the ammonia provided by the HisH subunit. This chain is Imidazole glycerol phosphate synthase subunit HisF, found in Methylobacterium sp. (strain 4-46).